The primary structure comprises 71 residues: Small ribosomal subunit protein bS21 (71 aa).

This sequence belongs to the bacterial ribosomal protein bS21 family.

This chain is Small ribosomal subunit protein bS21, found in Acinetobacter baylyi (strain ATCC 33305 / BD413 / ADP1).